We begin with the raw amino-acid sequence, 195 residues long: Xanthine phosphoribosyltransferase (195 aa).

Xanthine-binding residues include Leu-20 and Asn-27. 128 to 132 (ANGQA) is a 5-phospho-alpha-D-ribose 1-diphosphate binding site. Lys-156 serves as a coordination point for xanthine.

The protein belongs to the purine/pyrimidine phosphoribosyltransferase family. Xpt subfamily. As to quaternary structure, homodimer.

The protein localises to the cytoplasm. It carries out the reaction XMP + diphosphate = xanthine + 5-phospho-alpha-D-ribose 1-diphosphate. It functions in the pathway purine metabolism; XMP biosynthesis via salvage pathway; XMP from xanthine: step 1/1. Its function is as follows. Converts the preformed base xanthine, a product of nucleic acid breakdown, to xanthosine 5'-monophosphate (XMP), so it can be reused for RNA or DNA synthesis. This chain is Xanthine phosphoribosyltransferase, found in Lactiplantibacillus plantarum (strain ATCC BAA-793 / NCIMB 8826 / WCFS1) (Lactobacillus plantarum).